A 98-amino-acid chain; its full sequence is uncharacterized protein (98 aa).

The tract at residues 77–98 (SERAGEEVPPLAVAGSDDGHDH) is disordered.

It to M.tuberculosis Rv1991c and Rv3269.

This is an uncharacterized protein from Mycobacterium bovis (strain ATCC BAA-935 / AF2122/97).